Reading from the N-terminus, the 125-residue chain is MARIASVNIPDNKRLVVSLTYVYGLGPAMAAEICNKAKISKDKKAKELTDQELISLRNIIESEYKVEGDLRREVTLNIKKKKDIRCYQGLRHIRKLPVRGQNTHSNARTRKGKAIAIAGKKKAVK.

This sequence belongs to the universal ribosomal protein uS13 family. Part of the 30S ribosomal subunit. Forms a loose heterodimer with protein S19. Forms two bridges to the 50S subunit in the 70S ribosome.

Its function is as follows. Located at the top of the head of the 30S subunit, it contacts several helices of the 16S rRNA. In the 70S ribosome it contacts the 23S rRNA (bridge B1a) and protein L5 of the 50S subunit (bridge B1b), connecting the 2 subunits; these bridges are implicated in subunit movement. Contacts the tRNAs in the A and P-sites. This is Small ribosomal subunit protein uS13 from Rickettsia akari (strain Hartford).